We begin with the raw amino-acid sequence, 708 residues long: ATP-dependent DNA helicase Hel308 (708 aa).

ATP-binding positions include Gln28 and 46–53 (TATASGKS). One can recognise a Helicase ATP-binding domain in the interval 33-198 (RAGIFDGRSV…WLGARLVESS (166 aa)). Positions 143-146 (DEIH) match the DEAH box motif. Positions 231–429 (EVALAVDAVA…EPNLRAHVLG (199 aa)) constitute a Helicase C-terminal domain.

Belongs to the helicase family. Hel308 subfamily. In terms of assembly, monomer.

It carries out the reaction Couples ATP hydrolysis with the unwinding of duplex DNA by translocating in the 3'-5' direction.. The enzyme catalyses ATP + H2O = ADP + phosphate + H(+). In terms of biological role, DNA-dependent ATPase and 3'-5' DNA helicase that may be involved in repair of stalled replication forks. This chain is ATP-dependent DNA helicase Hel308, found in Pyrobaculum calidifontis (strain DSM 21063 / JCM 11548 / VA1).